The sequence spans 4960 residues: Malformin synthetase mlfA (4960 aa).

An adenylation 1 region spans residues 194–564; that stretch reads ERHATNRPHS…CGRADTQVKL (371 aa). Positions 705 to 778 constitute a Carrier 1 domain; it reads SRLEQEVQLA…EAASLAEVQE (74 aa). S739 bears the O-(pantetheine 4'-phosphoryl)serine mark. Positions 816–1247 are condensation 1; that stretch reads EDVFPCTTMQ…ALNTLSLLQA (432 aa). The interval 1275 to 1650 is adenylation 2; that stretch reads DRWVTRQPEG…GRKDTQVKLR (376 aa). Positions 1777 to 1854 constitute a Carrier 2 domain; it reads TPASELERTL…HLAAEVGEPA (78 aa). 2 disordered regions span residues 1855-1883 and 1917-1943; these read GQSA…NDGV and GGSS…KKNA. Low complexity-rich tracts occupy residues 1857-1881 and 1919-1936; these read SASS…STND and SSSN…SSSS. Residues 1989-2404 form a condensation 2 region; the sequence is EDIYPATALQ…AVSCSDKETL (416 aa). The tract at residues 2427–2819 is adenylation 3; sequence RRTPHAPAVC…IGRRDGQLKL (393 aa). Residues 2955–3031 enclose the Carrier 3 domain; the sequence is RPVTSQEREM…QLICHINTIR (77 aa). Position 2992 is an O-(pantetheine 4'-phosphoryl)serine (S2992). Condensation regions lie at residues 3049 to 3464 and 3520 to 3889; these read VALA…FTFP and SGYV…EQLV. Residues 3914–4304 form an adenylation 4 region; it reads HNSRQAVCAW…VGRKDNQIKF (391 aa). Positions 4438–4514 constitute a Carrier 4 domain; that stretch reads MPSTAAERKM…DLSDQAKSLI (77 aa). An O-(pantetheine 4'-phosphoryl)serine modification is found at S4475. Residues 4551–4878 are condensation 5; the sequence is DVLPTTSFQH…LQTIVQHQNN (328 aa).

The protein belongs to the NRP synthetase family.

The protein operates within secondary metabolite biosynthesis. Functionally, nonribosomal peptide synthetase; part of the gene cluster that mediates the biosynthesis of malformins, cyclic pentapeptides with a disulfide bond between 2 consecutive cysteins, that show potential anti-tumor as well as antimalarial and antitrypanosomal properties. The nonribosomal peptide synthetase mlfA is responsible of the formation of the cyclic pentapeptide. The malformin biosynthesis clusters in malformin-producing fungi also contain enzymes involved in the formation of the disulfide bond between the two consecutive cysteins within malformins, in addition to additional tailoring enzymes such as methyltransferases or oxidoreductases. They are also composed of up to 4 major facilitator superfamily transporters, and transcription factors probably involved in the regulation of the expression of those clusters. The polypeptide is Malformin synthetase mlfA (Aspergillus neoniger (strain CBS 115656)).